A 190-amino-acid chain; its full sequence is Proline-rich protein 3 (190 aa).

3 disordered regions span residues 1–94 (MPKR…GLGP), 110–130 (PPFPGPGHGGPSRESFYKEAR), and 142–161 (KNTYPPKDSPQMMEDKSDRP). Residues 37–48 (MGPPSLLGPPPM) show a composition bias toward pro residues. Residues 157–185 (KSDRPVCRHFSKKGHCRYEDHCAFYHPGV) form a C3H1-type zinc finger.

The chain is Proline-rich protein 3 (Prr3) from Mus musculus (Mouse).